Reading from the N-terminus, the 455-residue chain is Bifunctional protein GlmU (455 aa).

The tract at residues 1–226 is pyrophosphorylase; sequence MSLEIVILAA…PMEVQGANDR (226 aa). UDP-N-acetyl-alpha-D-glucosamine is bound by residues 8-11, lysine 22, glutamine 73, 78-79, 99-101, glycine 136, glutamate 151, asparagine 166, and asparagine 224; these read LAAG, GT, and YGD. Aspartate 101 is a Mg(2+) binding site. Asparagine 224 contributes to the Mg(2+) binding site. The segment at 227–247 is linker; it reads KQLSELERHYQLRAGRRLMAQ. The N-acetyltransferase stretch occupies residues 248–455; sequence GVTLRDPARF…WKRPEKIKKN (208 aa). UDP-N-acetyl-alpha-D-glucosamine contacts are provided by arginine 330 and lysine 348. Residue histidine 360 is the Proton acceptor of the active site. Positions 363 and 374 each coordinate UDP-N-acetyl-alpha-D-glucosamine. Residues alanine 377, 383–384, serine 402, alanine 420, and arginine 437 contribute to the acetyl-CoA site; that span reads NY.

This sequence in the N-terminal section; belongs to the N-acetylglucosamine-1-phosphate uridyltransferase family. The protein in the C-terminal section; belongs to the transferase hexapeptide repeat family. Homotrimer. Requires Mg(2+) as cofactor.

It is found in the cytoplasm. It catalyses the reaction alpha-D-glucosamine 1-phosphate + acetyl-CoA = N-acetyl-alpha-D-glucosamine 1-phosphate + CoA + H(+). The catalysed reaction is N-acetyl-alpha-D-glucosamine 1-phosphate + UTP + H(+) = UDP-N-acetyl-alpha-D-glucosamine + diphosphate. The protein operates within nucleotide-sugar biosynthesis; UDP-N-acetyl-alpha-D-glucosamine biosynthesis; N-acetyl-alpha-D-glucosamine 1-phosphate from alpha-D-glucosamine 6-phosphate (route II): step 2/2. It functions in the pathway nucleotide-sugar biosynthesis; UDP-N-acetyl-alpha-D-glucosamine biosynthesis; UDP-N-acetyl-alpha-D-glucosamine from N-acetyl-alpha-D-glucosamine 1-phosphate: step 1/1. It participates in bacterial outer membrane biogenesis; LPS lipid A biosynthesis. Its function is as follows. Catalyzes the last two sequential reactions in the de novo biosynthetic pathway for UDP-N-acetylglucosamine (UDP-GlcNAc). The C-terminal domain catalyzes the transfer of acetyl group from acetyl coenzyme A to glucosamine-1-phosphate (GlcN-1-P) to produce N-acetylglucosamine-1-phosphate (GlcNAc-1-P), which is converted into UDP-GlcNAc by the transfer of uridine 5-monophosphate (from uridine 5-triphosphate), a reaction catalyzed by the N-terminal domain. In Pseudomonas fluorescens (strain Pf0-1), this protein is Bifunctional protein GlmU.